Consider the following 385-residue polypeptide: Tryptophan--tRNA ligase (385 aa).

The 'HIGH' region motif lies at 82–90; it reads PSGPMHIGH. The short motif at 253-257 is the 'KMSKS' region element; that stretch reads KMSAS.

The protein belongs to the class-I aminoacyl-tRNA synthetase family.

The protein resides in the cytoplasm. The enzyme catalyses tRNA(Trp) + L-tryptophan + ATP = L-tryptophyl-tRNA(Trp) + AMP + diphosphate + H(+). This Pyrococcus abyssi (strain GE5 / Orsay) protein is Tryptophan--tRNA ligase.